A 65-amino-acid polypeptide reads, in one-letter code: KEGYPMGRDGCKISCVINNNFCKVECQAKWRQSDGYCYFWGLSCYCTNLPDDAQVWDSSTNKCGG.

Positions 1–64 (KEGYPMGRDG…VWDSSTNKCG (64 aa)) constitute an LCN-type CS-alpha/beta domain. Disulfide bonds link C11/C63, C15/C37, C22/C44, and C26/C46.

It belongs to the long (4 C-C) scorpion toxin superfamily. Sodium channel inhibitor family. Beta subfamily. Expressed by the venom gland.

It is found in the secreted. Functionally, beta toxins bind voltage-independently at site-4 of sodium channels (Nav) and shift the voltage of activation toward more negative potentials thereby affecting sodium channel activation and promoting spontaneous and repetitive firing. The chain is Putative beta-neurotoxin RjAa4 from Rhopalurus junceus (Caribbean blue scorpion).